Consider the following 252-residue polypeptide: Cytochrome b6-f complex iron-sulfur subunit, chloroplastic (252 aa).

Residues 94 to 114 (LVLAAVAPVVASAGGCYLYYF) traverse the membrane as a helical segment. One can recognise a Rieske domain in the interval 141–235 (WFKSHKKNAR…VEDDNGKILL (95 aa)). [2Fe-2S] cluster contacts are provided by Cys181, His183, Cys199, and His202. An intrachain disulfide couples Cys186 to Cys201.

Belongs to the Rieske iron-sulfur protein family. As to quaternary structure, the 4 large subunits of the cytochrome b6-f complex are cytochrome b6, subunit IV (17 kDa polypeptide, petD), cytochrome f and the Rieske protein, while the 4 small subunits are petG, petL, petM and petN. The complex functions as a dimer. Requires [2Fe-2S] cluster as cofactor.

It is found in the plastid. The protein localises to the chloroplast thylakoid membrane. It catalyses the reaction 2 oxidized [plastocyanin] + a plastoquinol + 2 H(+)(in) = 2 reduced [plastocyanin] + a plastoquinone + 4 H(+)(out). Its function is as follows. Component of the cytochrome b6-f complex, which mediates electron transfer between photosystem II (PSII) and photosystem I (PSI), cyclic electron flow around PSI, and state transitions. The protein is Cytochrome b6-f complex iron-sulfur subunit, chloroplastic (petC) of Bigelowiella natans (Pedinomonas minutissima).